The primary structure comprises 324 residues: MATLLLQLLGLGVALAAAALILVSIVAFITATKMPPCYQHEEEKFFLNAKGQKEALPSIWDSPTKQLSVVVPSYNEEKRLPVMMDEALNYLEKRQKHDCTFTYEVIVVDDGSEDQTSKVALKYCQKYGSDKVRVITLVRNRGKGGAVRMGVFSSRGEKILMADADGATKFPDVEKLEKGLSDLQPWPEQMAIACGSRAHLEKESIAQRSYFRTFLMYGFHFLVWFLCVKGIRDTQCGFKLLTREAAARTFSSLHIERWAFDVELLYIAQCLQIPIAEVAVNWTEIEGSKLVPFWSWLQMGKDLLFIRLRYLTGAWRLKQTRKAS.

The Lumenal portion of the chain corresponds to 1–7 (MATLLLQ). Residues 8 to 28 (LLGLGVALAAAALILVSIVAF) form a helical membrane-spanning segment. The Cytoplasmic portion of the chain corresponds to 29-324 (ITATKMPPCY…WRLKQTRKAS (296 aa)).

Belongs to the glycosyltransferase 2 family.

It is found in the endoplasmic reticulum membrane. The enzyme catalyses a di-trans,poly-cis-dolichyl phosphate + UDP-alpha-D-glucose = a di-trans,poly-cis-dolichyl beta-D-glucosyl phosphate + UDP. It functions in the pathway protein modification; protein glycosylation. Functionally, dolichyl-phosphate beta-glucosyltransferase that operates in the biosynthetic pathway of dolichol-linked oligosaccharides, the glycan precursors employed in protein asparagine (N)-glycosylation. The assembly of dolichol-linked oligosaccharides begins on the cytosolic side of the endoplasmic reticulum membrane and finishes in its lumen. The sequential addition of sugars to dolichol pyrophosphate produces dolichol-linked oligosaccharides containing fourteen sugars, including two GlcNAcs, nine mannoses and three glucoses. Once assembled, the oligosaccharide is transferred from the lipid to nascent proteins by oligosaccharyltransferases. Dolichyl-phosphate beta-glucosyltransferase produces dolichyl beta-D-glucosyl phosphate/Dol-P-Glc, the glucose donor substrate used sequentially by ALG6, ALG8 and ALG10 to add glucose residues on top of the Man(9)GlcNAc(2)-PP-Dol structure. These are the three last steps in the biosynthetic pathway of dolichol-linked oligosaccharides to produce Glc(3)Man(9)GlcNAc(2)-PP-Dol. The enzyme is most probably active on the cytoplasmic side of the endoplasmic reticulum while its product Dol-P-Glc is the substrate for ALG6, ALG8 and ALG11 in the lumen of the endoplasmic reticulum. The chain is Dolichyl-phosphate beta-glucosyltransferase from Mus musculus (Mouse).